A 440-amino-acid polypeptide reads, in one-letter code: Protein disulfide-isomerase 2-3 (440 aa).

The first 24 residues, 1-24, serve as a signal peptide directing secretion; the sequence is MYKSPLTLLTLLTICFGFFDLSSA. Thioredoxin domains follow at residues 25–136 and 154–269; these read LYGS…KQIK and SKEK…ELVE. Catalysis depends on nucleophile residues C60 and C63. A disulfide bridge links C60 with C63. The segment at 143 to 163 is disordered; it reads LEGKSKPTGGGSKEKKSEPSA. An N-linked (GlcNAc...) asparagine glycan is attached at N168. Active-site nucleophile residues include C192 and C195. Residues C192 and C195 are joined by a disulfide bond. The Prevents secretion from ER motif lies at 437–440; that stretch reads KDEL.

This sequence belongs to the protein disulfide isomerase family. As to expression, widely expressed.

It localises to the endoplasmic reticulum lumen. It carries out the reaction Catalyzes the rearrangement of -S-S- bonds in proteins.. In terms of biological role, acts as a protein-folding catalyst that interacts with nascent polypeptides to catalyze the formation, isomerization, and reduction or oxidation of disulfide bonds. The protein is Protein disulfide-isomerase 2-3 (PDIL2-3) of Arabidopsis thaliana (Mouse-ear cress).